Here is a 967-residue protein sequence, read N- to C-terminus: Putative helicase MOV-10 (967 aa).

The segment at 85–117 is disordered; sequence ADQYRRPRTDTEVSAPAPGQQPSSGPPAPQSRA. The span at 98–107 shows a compositional bias: low complexity; it reads SAPAPGQQPS. 516 to 523 is an ATP binding site; sequence GPPGTGKT. A DEAG box motif is present at residues 638–641; the sequence is DECG.

The protein belongs to the DNA2/NAM7 helicase family. SDE3 subfamily.

The protein localises to the cytoplasm. The protein resides in the P-body. It localises to the cytoplasmic ribonucleoprotein granule. Its subcellular location is the stress granule. It is found in the nucleus. The catalysed reaction is ATP + H2O = ADP + phosphate + H(+). In terms of biological role, 5' to 3' RNA helicase that is involved in a number of cellular roles ranging from mRNA metabolism and translation, modulation of viral infectivity, inhibition of retrotransposition, or regulation of synaptic transmission. Plays an important role in innate antiviral immunity by promoting type I interferon production. Required for microRNA (miRNA)-mediated gene silencing by the RNA-induced silencing complex (RISC). Required for both miRNA-mediated translational repression and miRNA-mediated cleavage of complementary mRNAs by RISC. In cooperation with FMR1, regulates miRNA-mediated translational repression by AGO2. Restricts retrotransposition of long interspersed element-1 (LINE-1). Required for embryonic viability and for normal central nervous system development and function. May function as a messenger ribonucleoprotein (mRNP) clearance factor. The protein is Putative helicase MOV-10 (MOV10) of Gallus gallus (Chicken).